A 227-amino-acid polypeptide reads, in one-letter code: Thiamine-phosphate synthase (227 aa).

Residues 46-50 (QLRDK) and asparagine 87 contribute to the 4-amino-2-methyl-5-(diphosphooxymethyl)pyrimidine site. Mg(2+) is bound by residues aspartate 88 and aspartate 107. Serine 126 serves as a coordination point for 4-amino-2-methyl-5-(diphosphooxymethyl)pyrimidine. 152 to 154 (TPT) serves as a coordination point for 2-[(2R,5Z)-2-carboxy-4-methylthiazol-5(2H)-ylidene]ethyl phosphate. Lysine 155 provides a ligand contact to 4-amino-2-methyl-5-(diphosphooxymethyl)pyrimidine. Position 183 (glycine 183) interacts with 2-[(2R,5Z)-2-carboxy-4-methylthiazol-5(2H)-ylidene]ethyl phosphate.

The protein belongs to the thiamine-phosphate synthase family. Requires Mg(2+) as cofactor.

It carries out the reaction 2-[(2R,5Z)-2-carboxy-4-methylthiazol-5(2H)-ylidene]ethyl phosphate + 4-amino-2-methyl-5-(diphosphooxymethyl)pyrimidine + 2 H(+) = thiamine phosphate + CO2 + diphosphate. The catalysed reaction is 2-(2-carboxy-4-methylthiazol-5-yl)ethyl phosphate + 4-amino-2-methyl-5-(diphosphooxymethyl)pyrimidine + 2 H(+) = thiamine phosphate + CO2 + diphosphate. The enzyme catalyses 4-methyl-5-(2-phosphooxyethyl)-thiazole + 4-amino-2-methyl-5-(diphosphooxymethyl)pyrimidine + H(+) = thiamine phosphate + diphosphate. It functions in the pathway cofactor biosynthesis; thiamine diphosphate biosynthesis; thiamine phosphate from 4-amino-2-methyl-5-diphosphomethylpyrimidine and 4-methyl-5-(2-phosphoethyl)-thiazole: step 1/1. Functionally, condenses 4-methyl-5-(beta-hydroxyethyl)thiazole monophosphate (THZ-P) and 2-methyl-4-amino-5-hydroxymethyl pyrimidine pyrophosphate (HMP-PP) to form thiamine monophosphate (TMP). The sequence is that of Thiamine-phosphate synthase from Mycolicibacterium smegmatis (strain ATCC 700084 / mc(2)155) (Mycobacterium smegmatis).